Reading from the N-terminus, the 904-residue chain is Exo-beta-D-glucosaminidase (904 aa).

The N-terminal stretch at Met-1 to Ala-32 is a signal peptide. The segment at Ala-28–Gly-49 is disordered. The active-site Proton donor is the Asp-476. Residue Glu-545 is the Nucleophile of the active site. Residues Ser-813–Val-828 show a composition bias toward low complexity. The disordered stretch occupies residues Ser-813–Ser-833.

It belongs to the glycosyl hydrolase 2 family. In terms of assembly, monomer.

The protein resides in the secreted. It catalyses the reaction Hydrolysis of chitosan or chitosan oligosaccharides to remove successive D-glucosamine residues from the non-reducing termini.. Its function is as follows. Hydrolyzes chitosan and chitooligosaccharides with retention of anomeric configuration. Has no beta-mannosidase activity. The protein is Exo-beta-D-glucosaminidase of Streptomyces avermitilis (strain ATCC 31267 / DSM 46492 / JCM 5070 / NBRC 14893 / NCIMB 12804 / NRRL 8165 / MA-4680).